A 313-amino-acid chain; its full sequence is tRNA dimethylallyltransferase (313 aa).

11–18 (GPTASGKT) contacts ATP. 13-18 (TASGKT) is a binding site for substrate. 2 interaction with substrate tRNA regions span residues 36–39 (DSRQ) and 160–164 (QRLIR).

This sequence belongs to the IPP transferase family. In terms of assembly, monomer. Mg(2+) is required as a cofactor.

The catalysed reaction is adenosine(37) in tRNA + dimethylallyl diphosphate = N(6)-dimethylallyladenosine(37) in tRNA + diphosphate. Catalyzes the transfer of a dimethylallyl group onto the adenine at position 37 in tRNAs that read codons beginning with uridine, leading to the formation of N6-(dimethylallyl)adenosine (i(6)A). This Chlorobaculum parvum (strain DSM 263 / NCIMB 8327) (Chlorobium vibrioforme subsp. thiosulfatophilum) protein is tRNA dimethylallyltransferase.